Here is an 89-residue protein sequence, read N- to C-terminus: Small ribosomal subunit protein uS15 (89 aa).

It belongs to the universal ribosomal protein uS15 family. In terms of assembly, part of the 30S ribosomal subunit. Forms a bridge to the 50S subunit in the 70S ribosome, contacting the 23S rRNA.

Functionally, one of the primary rRNA binding proteins, it binds directly to 16S rRNA where it helps nucleate assembly of the platform of the 30S subunit by binding and bridging several RNA helices of the 16S rRNA. In terms of biological role, forms an intersubunit bridge (bridge B4) with the 23S rRNA of the 50S subunit in the ribosome. In Shewanella sediminis (strain HAW-EB3), this protein is Small ribosomal subunit protein uS15.